A 205-amino-acid chain; its full sequence is Ephrin-A1 (205 aa).

Residues 1 to 18 form the signal peptide; it reads MEFFWASLLGLCCSLAAA. Residues 19-151 form the Ephrin RBD domain; it reads NRHTVFWNSS…RLKVMIAGKI (133 aa). N-linked (GlcNAc...) asparagine glycosylation is present at Asn-26. 2 cysteine pairs are disulfide-bonded: Cys-51–Cys-92 and Cys-80–Cys-140. Ser-182 carries GPI-anchor amidated serine lipidation. Positions 183–205 are cleaved as a propeptide — removed in mature form; sequence AAPRLFPLAWAVLLLPFLLLQIP.

Belongs to the ephrin family. As to quaternary structure, monomer. Homodimer. Forms heterodimers with EPHA2. Binds to the receptor tyrosine kinases EPHA2, EPHA3, EPHA4, EPHA5, EPHA6 and EPHA7. Also binds with low affinity to EPHA1. In terms of processing, undergoes proteolysis by a metalloprotease to give rise to a soluble monomeric form. N-Glycosylation is required for binding to EPHA2 receptor and inducing its internalization.

The protein localises to the cell membrane. It is found in the secreted. Cell surface GPI-bound ligand for Eph receptors, a family of receptor tyrosine kinases which are crucial for migration, repulsion and adhesion during neuronal, vascular and epithelial development. Binds promiscuously Eph receptors residing on adjacent cells, leading to contact-dependent bidirectional signaling into neighboring cells. Plays an important role in angiogenesis and tumor neovascularization. The recruitment of VAV2, VAV3 and PI3-kinase p85 subunit by phosphorylated EPHA2 is critical for EFNA1-induced RAC1 GTPase activation and vascular endothelial cell migration and assembly. Exerts anti-oncogenic effects in tumor cells through activation and down-regulation of EPHA2. Activates EPHA2 by inducing tyrosine phosphorylation which leads to its internalization and degradation. Acts as a negative regulator in the tumorigenesis of gliomas by down-regulating EPHA2 and FAK. Can evoke collapse of embryonic neuronal growth cone and regulates dendritic spine morphogenesis. The polypeptide is Ephrin-A1 (EFNA1) (Bos taurus (Bovine)).